The primary structure comprises 141 residues: 16 kDa protein (141 aa).

Residues 100-119 (TVKKSRNSKPSKKKFKERKE) are disordered. Positions 102–115 (KKSRNSKPSKKKFK) are enriched in basic residues.

The polypeptide is 16 kDa protein (Tobacco rattle virus (strain PLB)).